We begin with the raw amino-acid sequence, 260 residues long: Tetraspanin-14 (260 aa).

At 1–10 (MKSQSHKPWN) the chain is on the cytoplasmic side. Residues 11 to 31 (LVAGIFFPIITFFLSAPLVGH) traverse the membrane as a helical segment. Residues 32-54 (ALYLFCMRNDHVYYRDFQSTLPR) lie on the Extracellular side of the membrane. A helical membrane pass occupies residues 55 to 75 (VQTLVSVSLLALFLLSNIGMF). Topologically, residues 76 to 80 (LRPRR) are cytoplasmic. Residues 81–101 (LSYFLVIVFFIGFAYSGVYKM) form a helical membrane-spanning segment. Topologically, residues 102 to 260 (ESRRFSPTPM…FLSSLTSLFR (159 aa)) are extracellular. Asn-182 carries N-linked (GlcNAc...) asparagine glycosylation.

This sequence belongs to the tetraspanin (TM4SF) family.

Its subcellular location is the membrane. May be involved in the regulation of cell differentiation. In Arabidopsis thaliana (Mouse-ear cress), this protein is Tetraspanin-14 (TET14).